The primary structure comprises 457 residues: Siroheme synthase 2 (457 aa).

Residues 1–204 are precorrin-2 dehydrogenase /sirohydrochlorin ferrochelatase; the sequence is MDHLPIFCQL…DDRQAVADTT (204 aa). NAD(+) is bound by residues 22–23 and 43–44; these read DV and LD. Phosphoserine is present on serine 128. The uroporphyrinogen-III C-methyltransferase stretch occupies residues 216–457; sequence GEVVLVGAGP…RDKLNWFSNH (242 aa). Proline 225 lines the S-adenosyl-L-methionine pocket. Aspartate 248 acts as the Proton acceptor in catalysis. Lysine 270 (proton donor) is an active-site residue. Residues 301–303, isoleucine 306, 331–332, methionine 382, and glycine 411 contribute to the S-adenosyl-L-methionine site; these read GGD and TA.

It in the N-terminal section; belongs to the precorrin-2 dehydrogenase / sirohydrochlorin ferrochelatase family. The protein in the C-terminal section; belongs to the precorrin methyltransferase family.

The enzyme catalyses uroporphyrinogen III + 2 S-adenosyl-L-methionine = precorrin-2 + 2 S-adenosyl-L-homocysteine + H(+). It carries out the reaction precorrin-2 + NAD(+) = sirohydrochlorin + NADH + 2 H(+). It catalyses the reaction siroheme + 2 H(+) = sirohydrochlorin + Fe(2+). The protein operates within cofactor biosynthesis; adenosylcobalamin biosynthesis; precorrin-2 from uroporphyrinogen III: step 1/1. It participates in cofactor biosynthesis; adenosylcobalamin biosynthesis; sirohydrochlorin from precorrin-2: step 1/1. Its pathway is porphyrin-containing compound metabolism; siroheme biosynthesis; precorrin-2 from uroporphyrinogen III: step 1/1. It functions in the pathway porphyrin-containing compound metabolism; siroheme biosynthesis; siroheme from sirohydrochlorin: step 1/1. The protein operates within porphyrin-containing compound metabolism; siroheme biosynthesis; sirohydrochlorin from precorrin-2: step 1/1. Functionally, multifunctional enzyme that catalyzes the SAM-dependent methylations of uroporphyrinogen III at position C-2 and C-7 to form precorrin-2 via precorrin-1. Then it catalyzes the NAD-dependent ring dehydrogenation of precorrin-2 to yield sirohydrochlorin. Finally, it catalyzes the ferrochelation of sirohydrochlorin to yield siroheme. This Klebsiella pneumoniae subsp. pneumoniae (strain ATCC 700721 / MGH 78578) protein is Siroheme synthase 2.